A 303-amino-acid chain; its full sequence is N-acetyl-D-glucosamine kinase (303 aa).

ATP contacts are provided by residues 4-11 (GFDIGGTK) and 133-140 (GVGGGLVL). Residues H157, C177, C179, and C184 each contribute to the Zn(2+) site.

This sequence belongs to the ROK (NagC/XylR) family. NagK subfamily.

The enzyme catalyses N-acetyl-D-glucosamine + ATP = N-acetyl-D-glucosamine 6-phosphate + ADP + H(+). The protein operates within cell wall biogenesis; peptidoglycan recycling. Its function is as follows. Catalyzes the phosphorylation of N-acetyl-D-glucosamine (GlcNAc) derived from cell-wall degradation, yielding GlcNAc-6-P. This is N-acetyl-D-glucosamine kinase from Citrobacter koseri (strain ATCC BAA-895 / CDC 4225-83 / SGSC4696).